We begin with the raw amino-acid sequence, 231 residues long: Ion-translocating oxidoreductase complex subunit E (231 aa).

6 helical membrane-spanning segments follow: residues 18 to 38 (ALVQ…ATNA), 39 to 59 (LGLG…ISTL), 63 to 83 (TPAE…VSAV), 86 to 106 (LINA…PLIV), 125 to 145 (ALSA…MFVL), and 182 to 202 (PFLL…MLAG).

Belongs to the NqrDE/RnfAE family. As to quaternary structure, the complex is composed of six subunits: RsxA, RsxB, RsxC, RsxD, RsxE and RsxG.

The protein resides in the cell inner membrane. Part of a membrane-bound complex that couples electron transfer with translocation of ions across the membrane. Required to maintain the reduced state of SoxR. The protein is Ion-translocating oxidoreductase complex subunit E of Shigella boydii serotype 18 (strain CDC 3083-94 / BS512).